The chain runs to 628 residues: Nucleoside-triphosphatase 2 (628 aa).

The signal sequence occupies residues 1 to 25; that stretch reads MWLPVYVPLLLVFGVSLSLPHGSLG. The active-site Proton acceptor is Glu236. Asn432 carries an N-linked (GlcNAc...) asparagine glycan.

This sequence belongs to the GDA1/CD39 NTPase family. As to quaternary structure, homotetramer.

It is found in the secreted. It localises to the parasitophorous vacuole. The enzyme catalyses a ribonucleoside 5'-triphosphate + H2O = a ribonucleoside 5'-diphosphate + phosphate + H(+). May perform an important processing step in the conversion of high energy nucleotides prior to uptake by the parasite. NTPAse-II has a specific activity 4.5-fold lower than NTPAse-I in hydrolysis of ATP. The primary difference between these isozymes lies in their ability to hydrolyze nucleoside triphosphate versus diphosphate substrates. While NTPAse-II hydrolyzes ATP to ADP and ADP to AMP at almost the same rate, NTPAse-I hydrolyzes ADP to AMP at a much slower rate (0.7% of the rate for ATP). The polypeptide is Nucleoside-triphosphatase 2 (NTP1) (Toxoplasma gondii).